Consider the following 816-residue polypeptide: Phosphatidylinositol 4-kinase beta (816 aa).

Disordered stretches follow at residues 1–29, 99–121, and 250–318; these read MGDM…GGSL, EEED…RRRQ, and RKRE…SFSS. Gly2 bears the N-acetylglycine mark. The tract at residues 2 to 68 is interaction with ACBD3; the sequence is GDMVVEPATL…VKLLHGGVAI (67 aa). A compositionally biased stretch (low complexity) spans 10-29; it reads TLKPTSEPTPSPSGNNGGSL. The region spanning 61–242 is the PIK helical domain; sequence LLHGGVAISS…GTKLRKLILS (182 aa). Ser258 is modified (phosphoserine). Thr263 carries the phosphothreonine modification. 5 positions are modified to phosphoserine: Ser266, Ser275, Ser277, Ser284, and Ser294. 2 stretches are compositionally biased toward polar residues: residues 278-297 and 306-318; these read DATA…SNPK and SSST…SFSS. Ser428 carries the phosphoserine modification. Residue Thr438 is modified to Phosphothreonine. The residue at position 511 (Ser511) is a Phosphoserine. Phosphothreonine is present on residues Thr517 and Thr519. A PI3K/PI4K catalytic domain is found at 535 to 801; the sequence is EPWQEKVRRI…MVDGSMRSIT (267 aa). The interval 541–547 is G-loop; that stretch reads VRRIREG. Positions 668–676 are catalytic loop; sequence QVKDRHNGN. Positions 687–711 are activation loop; that stretch reads HIDFGFILSSSPRNLGFETSAFKLT.

It belongs to the PI3/PI4-kinase family. Type III PI4K subfamily. As to quaternary structure, interacts with ARF1 and ARF3 in the Golgi complex, but not with ARF4, ARF5 or ARF6. Interacts with NCS1/FREQ in a calcium-independent manner. Interacts with CALN1/CABP8 and CALN2/CABP7; in a calcium-dependent manner; this interaction competes with NCS1/FREQ binding. Interacts with ACBD3. Interacts with ARMH3, YWHAB, YWHAE, YWHAG, YWHAH, YWHAQ, YWHAZ and SFN. Interacts with GGA2 (via VHS domain); the interaction is important for PI4KB location at the Golgi apparatus membrane. Interacts with ATG9A. It depends on Mg(2+) as a cofactor. Mn(2+) is required as a cofactor. Strongly expressed in brain, kidney, lung, small intestine, uterus and adrenal gland. Weaker expression in liver, heart, skeletal muscle, thymus and testis. Not detected in spleen.

It localises to the golgi apparatus. The protein resides in the endomembrane system. The protein localises to the mitochondrion outer membrane. Its subcellular location is the rough endoplasmic reticulum membrane. It is found in the golgi apparatus membrane. It carries out the reaction a 1,2-diacyl-sn-glycero-3-phospho-(1D-myo-inositol) + ATP = a 1,2-diacyl-sn-glycero-3-phospho-(1D-myo-inositol 4-phosphate) + ADP + H(+). Inhibited by wortmannin. Increased kinase activity upon interaction with NCS1/FREQ. Functionally, phosphorylates phosphatidylinositol (PI) in the first committed step in the production of the second messenger inositol-1,4,5,-trisphosphate (PIP). May regulate Golgi disintegration/reorganization during mitosis, possibly via its phosphorylation. Involved in Golgi-to-plasma membrane trafficking. May play an important role in the inner ear development. This Rattus norvegicus (Rat) protein is Phosphatidylinositol 4-kinase beta (Pi4kb).